We begin with the raw amino-acid sequence, 198 residues long: Holliday junction branch migration complex subunit RuvA (198 aa).

The segment at 1–63 is domain I; it reads MYDYIKGQLT…EDAQLLFGFH (63 aa). The interval 64–142 is domain II; the sequence is SEEEKDVFLK…EAPKEESSKL (79 aa). The tract at residues 143-147 is flexible linker; the sequence is PKAKH. The interval 148 to 198 is domain III; sequence QENEQLDEAIEALLALGYKATELKKIRAFFEGTSETAEQYIKSALKMLMKG.

The protein belongs to the RuvA family. Homotetramer. Forms an RuvA(8)-RuvB(12)-Holliday junction (HJ) complex. HJ DNA is sandwiched between 2 RuvA tetramers; dsDNA enters through RuvA and exits via RuvB. An RuvB hexamer assembles on each DNA strand where it exits the tetramer. Each RuvB hexamer is contacted by two RuvA subunits (via domain III) on 2 adjacent RuvB subunits; this complex drives branch migration. In the full resolvosome a probable DNA-RuvA(4)-RuvB(12)-RuvC(2) complex forms which resolves the HJ.

It is found in the cytoplasm. Its function is as follows. The RuvA-RuvB-RuvC complex processes Holliday junction (HJ) DNA during genetic recombination and DNA repair, while the RuvA-RuvB complex plays an important role in the rescue of blocked DNA replication forks via replication fork reversal (RFR). RuvA specifically binds to HJ cruciform DNA, conferring on it an open structure. The RuvB hexamer acts as an ATP-dependent pump, pulling dsDNA into and through the RuvAB complex. HJ branch migration allows RuvC to scan DNA until it finds its consensus sequence, where it cleaves and resolves the cruciform DNA. The sequence is that of Holliday junction branch migration complex subunit RuvA from Streptococcus equi subsp. zooepidemicus (strain MGCS10565).